The following is a 224-amino-acid chain: Proline/serine-rich protein C17A5.10 (224 aa).

Over residues 1–10 (MTDDSVPPPS) the composition is skewed to pro residues. A disordered region spans residues 1–110 (MTDDSVPPPS…SNYNTAKPPY (110 aa)). Over residues 31–52 (TSTSAGHPSSSSSTLPNYAASS) the composition is skewed to low complexity. Composition is skewed to polar residues over residues 53–68 (LNSRPVSSSGSGNAYS), 77–94 (PTSQRPNSWQPGNASTMY), and 101–110 (SNYNTAKPPY).

Belongs to the HUA1 family.

Its subcellular location is the cytoplasm. Its function is as follows. May be involved in assembly and disassembly of the actin cytoskeleton. The sequence is that of Proline/serine-rich protein C17A5.10 from Schizosaccharomyces pombe (strain 972 / ATCC 24843) (Fission yeast).